Here is a 369-residue protein sequence, read N- to C-terminus: Core histone macro-H2A.1 (369 aa).

N6-lactoyllysine; alternate occurs at positions 7 and 9. Residues R15–E90 form the Histone H2A domain. Residue K18 is modified to N6-methyllysine. K116 carries the post-translational modification N6-acetyllysine; alternate. Residue K116 forms a Glycyl lysine isopeptide (Lys-Gly) (interchain with G-Cter in ubiquitin); alternate linkage. Residue K117 forms a Glycyl lysine isopeptide (Lys-Gly) (interchain with G-Cter in ubiquitin) linkage. Residue K123 is modified to N6-acetyllysine; alternate. N6,N6-dimethyllysine; alternate is present on K123. K123 is covalently cross-linked (Glycyl lysine isopeptide (Lys-Gly) (interchain with G-Cter in SUMO2); alternate). A disordered region spans residues I128–A180. A Phosphothreonine modification is found at T129. The segment covering T144 to K160 has biased composition (basic residues). The segment covering V165–G177 has biased composition (polar residues). Residue K167 forms a Glycyl lysine isopeptide (Lys-Gly) (interchain with G-Cter in SUMO2) linkage. Phosphoserine is present on residues S170 and S173. Position 178 is a phosphothreonine (T178). The 184-residue stretch at T184–D367 folds into the Macro domain. Residue K189 forms a Glycyl lysine isopeptide (Lys-Gly) (interchain with G-Cter in SUMO2) linkage. D203, I204, V226, S275, G312, S313, G314, and N316 together coordinate a glycoprotein. K320 is covalently cross-linked (Glycyl lysine isopeptide (Lys-Gly) (interchain with G-Cter in SUMO2)).

Belongs to the histone H2A family. In terms of assembly, the nucleosome is a histone octamer containing two molecules each of H2A, H2B, H3 and H4 assembled in one H3-H4 heterotetramer and two H2A-H2B heterodimers. ADP-ribosylated. In terms of processing, monoubiquitinated at either Lys-116 or Lys-117. May also be polyubiquitinated. Ubiquitination is mediated by the CUL3/SPOP E3 complex and does not promote proteasomal degradation. Instead, it is required for enrichment in inactive X chromosome chromatin. Present in liver (at protein level).

The protein localises to the nucleus. It is found in the chromosome. Its function is as follows. Variant histone H2A which replaces conventional H2A in a subset of nucleosomes where it represses transcription. Nucleosomes wrap and compact DNA into chromatin, limiting DNA accessibility to the cellular machineries which require DNA as a template. Histones thereby play a central role in transcription regulation, DNA repair, DNA replication and chromosomal stability. DNA accessibility is regulated via a complex set of post-translational modifications of histones, also called histone code, and nucleosome remodeling. In terms of biological role, isoform that specifically binds poly-ADP-ribose and O-acetyl-ADP-ribose and plays a key role in NAD(+) metabolism. Able to bind to the ends of poly-ADP-ribose chains created by PARP1 and cap them. This prevents PARP1 from further addition of ADP-ribose and thus limits the consumption of nuclear NAD(+), allowing the cell to maintain proper NAD(+) levels in both the nucleus and the mitochondria to promote proper mitochondrial respiration. Functionally, in contrast to isoform 1, does not bind poly-ADP-ribose. In Gallus gallus (Chicken), this protein is Core histone macro-H2A.1.